The following is a 311-amino-acid chain: Non-homologous end joining protein Ku (311 aa).

Residues 26-210 (ISFGLVNIPI…NVNDKELQTA (185 aa)) form the Ku domain. The disordered stretch occupies residues 269-311 (ASIDRTRRPNRETPAAAPAQAAEPKGAGDKKQKTTRKKASGTS). Residues 282–293 (PAAAPAQAAEPK) show a composition bias toward low complexity. Residues 301 to 311 (KTTRKKASGTS) show a composition bias toward basic residues.

Belongs to the prokaryotic Ku family. In terms of assembly, homodimer. Interacts with LigD.

The protein localises to the spore core. In terms of biological role, with LigD forms a non-homologous end joining (NHEJ) DNA repair enzyme, which repairs dsDNA breaks with reduced fidelity. Binds linear dsDNA with 5'- and 3'- overhangs but not closed circular dsDNA nor ssDNA. Recruits and stimulates the ligase activity of LigD. Probably involved in DNA repair during spore germination. The sequence is that of Non-homologous end joining protein Ku from Bacillus subtilis (strain 168).